The following is a 167-amino-acid chain: UTP pyrophosphatase (167 aa).

It catalyses the reaction UTP + H2O = UMP + diphosphate + H(+). Functionally, specifically catalyzes the hydrolysis of UTP to UMP and diphosphate in vitro, albeit at apparently slow rate. Shows no activity towards ATP, GTP, CTP, dTTP and ITP as substrates. The chain is UTP pyrophosphatase from Escherichia coli (strain K12).